Here is a 427-residue protein sequence, read N- to C-terminus: 3-phosphoshikimate 1-carboxyvinyltransferase (427 aa).

Residues K21, S22, and R26 each contribute to the 3-phosphoshikimate site. K21 serves as a coordination point for phosphoenolpyruvate. Phosphoenolpyruvate-binding residues include G93 and R121. 4 residues coordinate 3-phosphoshikimate: S166, Q168, D314, and K341. Q168 provides a ligand contact to phosphoenolpyruvate. The active-site Proton acceptor is D314. Residues R345 and R387 each contribute to the phosphoenolpyruvate site.

This sequence belongs to the EPSP synthase family. As to quaternary structure, monomer.

The protein resides in the cytoplasm. The catalysed reaction is 3-phosphoshikimate + phosphoenolpyruvate = 5-O-(1-carboxyvinyl)-3-phosphoshikimate + phosphate. It functions in the pathway metabolic intermediate biosynthesis; chorismate biosynthesis; chorismate from D-erythrose 4-phosphate and phosphoenolpyruvate: step 6/7. Its function is as follows. Catalyzes the transfer of the enolpyruvyl moiety of phosphoenolpyruvate (PEP) to the 5-hydroxyl of shikimate-3-phosphate (S3P) to produce enolpyruvyl shikimate-3-phosphate and inorganic phosphate. The protein is 3-phosphoshikimate 1-carboxyvinyltransferase of Alkaliphilus oremlandii (strain OhILAs) (Clostridium oremlandii (strain OhILAs)).